A 295-amino-acid chain; its full sequence is Tyrosine recombinase XerD (295 aa).

The Core-binding (CB) domain maps to M1 to L85. The region spanning K106–N289 is the Tyr recombinase domain. Residues R146, K170, H241, R244, and H267 contribute to the active site. Y276 (O-(3'-phospho-DNA)-tyrosine intermediate) is an active-site residue.

This sequence belongs to the 'phage' integrase family. XerD subfamily. As to quaternary structure, forms a cyclic heterotetrameric complex composed of two molecules of XerC and two molecules of XerD.

The protein localises to the cytoplasm. In terms of biological role, site-specific tyrosine recombinase, which acts by catalyzing the cutting and rejoining of the recombining DNA molecules. The XerC-XerD complex is essential to convert dimers of the bacterial chromosome into monomers to permit their segregation at cell division. It also contributes to the segregational stability of plasmids. The chain is Tyrosine recombinase XerD from Staphylococcus haemolyticus (strain JCSC1435).